Here is a 101-residue protein sequence, read N- to C-terminus: Integration host factor subunit alpha (101 aa).

The protein belongs to the bacterial histone-like protein family. As to quaternary structure, heterodimer of an alpha and a beta chain.

In terms of biological role, this protein is one of the two subunits of integration host factor, a specific DNA-binding protein that functions in genetic recombination as well as in transcriptional and translational control. The protein is Integration host factor subunit alpha of Alkalilimnicola ehrlichii (strain ATCC BAA-1101 / DSM 17681 / MLHE-1).